The chain runs to 275 residues: Putative Ig-like V-type domain-containing protein FPV055 (275 aa).

Ig-like V-type domains follow at residues 25-122 (KTFV…MNLG) and 140-239 (PRRS…KSLS).

This chain is Putative Ig-like V-type domain-containing protein FPV055, found in Fowlpox virus (strain NVSL) (FPV).